Consider the following 283-residue polypeptide: HTH-type transcriptional activator RhaR (283 aa).

An HTH araC/xylS-type domain is found at 179 to 277 (DLLMAALGNS…GVTPRVWRQQ (99 aa)). 2 consecutive DNA-binding regions (H-T-H motif) follow at residues 196 to 217 (QHFC…RQQT) and 244 to 267 (ISEI…TRET).

As to quaternary structure, binds DNA as a dimer.

It is found in the cytoplasm. In terms of biological role, activates expression of the rhaSR operon in response to L-rhamnose. The protein is HTH-type transcriptional activator RhaR of Cronobacter sakazakii (strain ATCC BAA-894) (Enterobacter sakazakii).